The primary structure comprises 211 residues: Large ribosomal subunit protein eL13 (211 aa).

N6-acetyllysine is present on Lys-16. Phosphoserine occurs at positions 52, 77, and 106. Glycyl lysine isopeptide (Lys-Gly) (interchain with G-Cter in SUMO2) cross-links involve residues Lys-123 and Lys-145. A Glycyl lysine isopeptide (Lys-Gly) (interchain with G-Cter in SUMO1); alternate cross-link involves residue Lys-174. Residues Lys-174 and Lys-177 each participate in a glycyl lysine isopeptide (Lys-Gly) (interchain with G-Cter in SUMO2); alternate cross-link. An N6-acetyllysine; alternate modification is found at Lys-177.

This sequence belongs to the eukaryotic ribosomal protein eL13 family. In terms of assembly, component of the 60S large ribosomal subunit (LSU).

The protein localises to the cytoplasm. Component of the ribosome, a large ribonucleoprotein complex responsible for the synthesis of proteins in the cell. The small ribosomal subunit (SSU) binds messenger RNAs (mRNAs) and translates the encoded message by selecting cognate aminoacyl-transfer RNA (tRNA) molecules. The large subunit (LSU) contains the ribosomal catalytic site termed the peptidyl transferase center (PTC), which catalyzes the formation of peptide bonds, thereby polymerizing the amino acids delivered by tRNAs into a polypeptide chain. The nascent polypeptides leave the ribosome through a tunnel in the LSU and interact with protein factors that function in enzymatic processing, targeting, and the membrane insertion of nascent chains at the exit of the ribosomal tunnel. As part of the LSU, it is probably required for its formation and the maturation of rRNAs. Plays a role in bone development. This Cricetulus griseus (Chinese hamster) protein is Large ribosomal subunit protein eL13 (RPL13).